Here is a 116-residue protein sequence, read N- to C-terminus: Non-specific lipid-transfer protein 1 (116 aa).

The first 25 residues, Met-1–Ala-25, serve as a signal peptide directing secretion. 4 disulfides stabilise this stretch: Cys-28–Cys-75, Cys-38–Cys-52, Cys-53–Cys-98, and Cys-73–Cys-112.

This sequence belongs to the plant LTP family. In terms of tissue distribution, aleurone (external part) of the seeds.

Its function is as follows. Plant non-specific lipid-transfer proteins transfer phospholipids as well as galactolipids across membranes. May play a role in wax or cutin deposition in the cell walls of expanding epidermal cells and certain secretory tissues. In Oryza sativa subsp. indica (Rice), this protein is Non-specific lipid-transfer protein 1 (LTP).